A 352-amino-acid chain; its full sequence is Gamma-aminobutyric acid-binding protein (352 aa).

The N-terminal stretch at 1–28 (MFKSLHQYAHVFSRLSLFGLAFAAAAQA) is a signal peptide.

This sequence belongs to the bacterial solute-binding protein 1 family.

Its subcellular location is the periplasm. Its function is as follows. Binds specifically gamma-aminobutyric acid (GABA) with nanomolar affinity. Does not bind structurally related compounds such as 4-aminovaleric acid, spermidine, histamine and butyric acid. The sequence is that of Gamma-aminobutyric acid-binding protein from Pseudomonas aeruginosa (strain ATCC 15692 / DSM 22644 / CIP 104116 / JCM 14847 / LMG 12228 / 1C / PRS 101 / PAO1).